The primary structure comprises 139 residues: Small ribosomal subunit protein uS12m (139 aa).

The N-terminal 29 residues, 1–29 (MSWSGLLRGLSMSLNYGLALAPRPWGTRP), are a transit peptide targeting the mitochondrion. Positions 37–57 (HRRGPPKFPPSKPGPTEGRPQ) are disordered.

The protein belongs to the universal ribosomal protein uS12 family. Component of the mitochondrial ribosome small subunit (28S) which comprises a 12S rRNA and about 30 distinct proteins.

It is found in the mitochondrion. This is Small ribosomal subunit protein uS12m (MRPS12) from Bos taurus (Bovine).